A 335-amino-acid polypeptide reads, in one-letter code: Biotin synthase (335 aa).

A Radical SAM core domain is found at 47 to 276 (FYGKKVKLNM…SKEIRISGGR (230 aa)). [4Fe-4S] cluster contacts are provided by Cys65, Cys69, and Cys72. [2Fe-2S] cluster contacts are provided by Cys109, Cys141, Cys201, and Arg271.

The protein belongs to the radical SAM superfamily. Biotin synthase family. As to quaternary structure, homodimer. It depends on [4Fe-4S] cluster as a cofactor. Requires [2Fe-2S] cluster as cofactor.

It carries out the reaction (4R,5S)-dethiobiotin + (sulfur carrier)-SH + 2 reduced [2Fe-2S]-[ferredoxin] + 2 S-adenosyl-L-methionine = (sulfur carrier)-H + biotin + 2 5'-deoxyadenosine + 2 L-methionine + 2 oxidized [2Fe-2S]-[ferredoxin]. The protein operates within cofactor biosynthesis; biotin biosynthesis; biotin from 7,8-diaminononanoate: step 2/2. Functionally, catalyzes the conversion of dethiobiotin (DTB) to biotin by the insertion of a sulfur atom into dethiobiotin via a radical-based mechanism. The sequence is that of Biotin synthase from Bacillus subtilis subsp. natto.